Consider the following 155-residue polypeptide: Ribonuclease 8 (155 aa).

A signal peptide spans 1–28 (MAPARAGCCPLLLLLLLGLWVAEIPVSA). Disulfide bonds link Cys-65/Cys-119, Cys-83/Cys-134, and Cys-90/Cys-97. Substrate is bound by residues 66-70 (KDLNT) and Lys-91. Catalysis depends on His-150, which acts as the Proton donor.

This sequence belongs to the pancreatic ribonuclease family.

The protein localises to the secreted. Has a low ribonuclease activity. The protein is Ribonuclease 8 (RNASE8) of Saguinus oedipus (Cotton-top tamarin).